The primary structure comprises 306 residues: Pantothenate kinase (306 aa).

ATP is bound at residue 91–98 (GSVAVGKS).

Belongs to the prokaryotic pantothenate kinase family.

The protein resides in the cytoplasm. The enzyme catalyses (R)-pantothenate + ATP = (R)-4'-phosphopantothenate + ADP + H(+). It functions in the pathway cofactor biosynthesis; coenzyme A biosynthesis; CoA from (R)-pantothenate: step 1/5. This is Pantothenate kinase from Streptococcus agalactiae serotype Ia (strain ATCC 27591 / A909 / CDC SS700).